The primary structure comprises 623 residues: Adenine deaminase 2 (623 aa).

It belongs to the metallo-dependent hydrolases superfamily. Adenine deaminase family. It depends on Mn(2+) as a cofactor.

The catalysed reaction is adenine + H2O + H(+) = hypoxanthine + NH4(+). This is Adenine deaminase 2 from Jannaschia sp. (strain CCS1).